The primary structure comprises 558 residues: Glucose-6-phosphate isomerase (558 aa).

Glu-362 functions as the Proton donor in the catalytic mechanism. Catalysis depends on residues His-393 and Lys-523.

It belongs to the GPI family.

Its subcellular location is the cytoplasm. It carries out the reaction alpha-D-glucose 6-phosphate = beta-D-fructose 6-phosphate. It participates in carbohydrate degradation; glycolysis; D-glyceraldehyde 3-phosphate and glycerone phosphate from D-glucose: step 2/4. The sequence is that of Glucose-6-phosphate isomerase (Pgi) from Drosophila yakuba (Fruit fly).